Reading from the N-terminus, the 128-residue chain is Large ribosomal subunit protein uL22 (128 aa).

Belongs to the universal ribosomal protein uL22 family. Part of the 50S ribosomal subunit.

In terms of biological role, this protein binds specifically to 23S rRNA; its binding is stimulated by other ribosomal proteins, e.g. L4, L17, and L20. It is important during the early stages of 50S assembly. It makes multiple contacts with different domains of the 23S rRNA in the assembled 50S subunit and ribosome. Its function is as follows. The globular domain of the protein is located near the polypeptide exit tunnel on the outside of the subunit, while an extended beta-hairpin is found that lines the wall of the exit tunnel in the center of the 70S ribosome. The polypeptide is Large ribosomal subunit protein uL22 (Prochlorococcus marinus (strain MIT 9301)).